The sequence spans 180 residues: Ribulose bisphosphate carboxylase small subunit, chloroplastic 3 (180 aa).

A chloroplast-targeting transit peptide spans Met1–Lys56.

It belongs to the RuBisCO small chain family. As to quaternary structure, heterohexadecamer of 8 large and 8 small subunits.

Its subcellular location is the plastid. The protein localises to the chloroplast. RuBisCO catalyzes two reactions: the carboxylation of D-ribulose 1,5-bisphosphate, the primary event in carbon dioxide fixation, as well as the oxidative fragmentation of the pentose substrate. Both reactions occur simultaneously and in competition at the same active site. Although the small subunit is not catalytic it is essential for maximal activity. Binds to abscisic acid (ABA); only half of the possible binding sites are occupied in the crystal; and there are indications this is a low affinity site. In Pisum sativum (Garden pea), this protein is Ribulose bisphosphate carboxylase small subunit, chloroplastic 3 (RBCS.3A).